The chain runs to 343 residues: MWLEWLVAWSWSLDGLRDCIATGIQSVRDCDGTAVITVACLLILFVWYCYHVGREQPRPHVSVNSLLQGVDANGLQNGSMYCQSPECARCTHHEGLNQKLYHNLQEYAKRYSWSGMGRIHKGIREQGRYLSSQPSIQKPEVFFLPDLPTTPYFSRDAQKHDVELLERNFQAILCEFETLYKAFSNCSLPQGWKVNSTPSGEWFTFDFVSQGVCVPRNCRKCPRTYRLLGSLRTCIGNNVFGNACISVLSPGTVITEHYGPTNIRIRCHLGLKTPNGCELVVGGEPQCWAEGRCLLFDDSFLHTAFHEGSAEDGPRVVFMVDLWHPNVAAAERQALDFIFAPGR.

At 1-31 (MWLEWLVAWSWSLDGLRDCIATGIQSVRDCD) the chain is on the cytoplasmic side. The chain crosses the membrane as a helical span at residues 32 to 52 (GTAVITVACLLILFVWYCYHV). Residues 53–343 (GREQPRPHVS…ALDFIFAPGR (291 aa)) lie on the Lumenal side of the membrane. Residues asparagine 77 and asparagine 185 are each glycosylated (N-linked (GlcNAc...) asparagine). 2 residues coordinate 2-oxoglutarate: tryptophan 202 and serine 246. Histidine 257 provides a ligand contact to Fe cation. Position 266-268 (266-268 (RCH)) interacts with 2-oxoglutarate. Histidine 302 lines the Fe cation pocket. Arginine 315 lines the 2-oxoglutarate pocket.

Belongs to the aspartyl/asparaginyl beta-hydroxylase family. Fe cation is required as a cofactor.

Its subcellular location is the membrane. In terms of biological role, may function as 2-oxoglutarate-dependent dioxygenase. The polypeptide is Aspartate beta-hydroxylase domain-containing protein 2 (Asphd2) (Mus musculus (Mouse)).